A 151-amino-acid polypeptide reads, in one-letter code: MYPAHLLVLLAVCVSLLGAASIPARPLNLYQFGNMIQCANHGRRPTRHYMDYGCYCGKGGSGTPVDELDRCCQIHDDCYGEAEKLPACNYMMSGPYYNTYSYECNDGELTCKDNNDECKAFICNCDRTAAICFARTPYNDANWNINTKTRC.

The signal sequence occupies residues 1–27 (MYPAHLLVLLAVCVSLLGAASIPARPL). Disulfide bonds link Cys38/Cys104, Cys54/Cys151, Cys56/Cys72, Cys71/Cys132, Cys78/Cys125, Cys88/Cys118, and Cys111/Cys123. Residues Tyr55, Gly57, and Gly59 each contribute to the Ca(2+) site. Residue His75 is part of the active site. Residue Asp76 coordinates Ca(2+). Asp126 is an active-site residue.

It belongs to the phospholipase A2 family. Group I subfamily. D49 sub-subfamily. Ca(2+) serves as cofactor. Expressed by the venom gland.

It localises to the secreted. The catalysed reaction is a 1,2-diacyl-sn-glycero-3-phosphocholine + H2O = a 1-acyl-sn-glycero-3-phosphocholine + a fatty acid + H(+). Its function is as follows. PLA2 catalyzes the calcium-dependent hydrolysis of the 2-acyl groups in 3-sn-phosphoglycerides. This chain is Acidic phospholipase A2 3, found in Tropidechis carinatus (Australian rough-scaled snake).